Reading from the N-terminus, the 243-residue chain is uncharacterized protein (243 aa).

A signal peptide spans Met-1–Ala-19. Asn-136 carries N-linked (GlcNAc...) asparagine glycosylation.

Its subcellular location is the secreted. This is an uncharacterized protein from Homo sapiens (Human).